We begin with the raw amino-acid sequence, 347 residues long: Dihydroorotate dehydrogenase (quinone) (347 aa).

Residues 62–66 (AGLDK) and alanine 86 each bind FMN. Lysine 66 contacts substrate. 111 to 115 (NRMGF) provides a ligand contact to substrate. FMN contacts are provided by asparagine 139 and asparagine 172. Asparagine 172 provides a ligand contact to substrate. The active-site Nucleophile is the serine 175. Asparagine 177 is a binding site for substrate. Residues lysine 217 and threonine 245 each contribute to the FMN site. 246 to 247 (NT) contributes to the substrate binding site. Residues glycine 268, glycine 297, and 318-319 (YT) each bind FMN.

This sequence belongs to the dihydroorotate dehydrogenase family. Type 2 subfamily. As to quaternary structure, monomer. The cofactor is FMN.

Its subcellular location is the cell membrane. It carries out the reaction (S)-dihydroorotate + a quinone = orotate + a quinol. It participates in pyrimidine metabolism; UMP biosynthesis via de novo pathway; orotate from (S)-dihydroorotate (quinone route): step 1/1. Catalyzes the conversion of dihydroorotate to orotate with quinone as electron acceptor. The protein is Dihydroorotate dehydrogenase (quinone) of Coxiella burnetii (strain CbuK_Q154) (Coxiella burnetii (strain Q154)).